The primary structure comprises 452 residues: Chaperone SurA (452 aa).

An N-terminal signal peptide occupies residues 1-28 (MKKTLRFAAVVSSLAASAALLVAAPAAA). PpiC domains are found at residues 186–288 (QQDL…RLVD) and 302–400 (IVQT…QVLN).

It localises to the periplasm. It carries out the reaction [protein]-peptidylproline (omega=180) = [protein]-peptidylproline (omega=0). Chaperone involved in the correct folding and assembly of outer membrane proteins. Recognizes specific patterns of aromatic residues and the orientation of their side chains, which are found more frequently in integral outer membrane proteins. May act in both early periplasmic and late outer membrane-associated steps of protein maturation. This Burkholderia orbicola (strain AU 1054) protein is Chaperone SurA.